The chain runs to 113 residues: MVRDIGLRIQPPAEKCDDPKCPWHGHLKIHGRVFEGIVVSDKPRKTVTVERQYYHYLKKYERYELRRSRIHAHNPPCINAKVGDRVLIAETRPLSKTKHFVVVAVLERAEERR.

This sequence belongs to the universal ribosomal protein uS17 family. As to quaternary structure, part of the 30S ribosomal subunit.

Its function is as follows. One of the primary rRNA binding proteins, it binds specifically to the 5'-end of 16S ribosomal RNA. In Pyrococcus abyssi (strain GE5 / Orsay), this protein is Small ribosomal subunit protein uS17.